A 644-amino-acid chain; its full sequence is Acetyl-coenzyme A synthetase (644 aa).

CoA contacts are provided by residues Arg189–Lys192 and Thr307. Residues Gly383–Pro385, Asp407–Thr412, Asp496, and Arg511 contribute to the ATP site. Ser519 lines the CoA pocket. Arg522 is a binding site for ATP. Mg(2+) is bound by residues Val533, His535, and Val538. CoA is bound at residue Arg580. Lys605 carries the post-translational modification N6-acetyllysine.

It belongs to the ATP-dependent AMP-binding enzyme family. It depends on Mg(2+) as a cofactor. Acetylated. Deacetylation by the SIR2-homolog deacetylase activates the enzyme.

The enzyme catalyses acetate + ATP + CoA = acetyl-CoA + AMP + diphosphate. In terms of biological role, catalyzes the conversion of acetate into acetyl-CoA (AcCoA), an essential intermediate at the junction of anabolic and catabolic pathways. AcsA undergoes a two-step reaction. In the first half reaction, AcsA combines acetate with ATP to form acetyl-adenylate (AcAMP) intermediate. In the second half reaction, it can then transfer the acetyl group from AcAMP to the sulfhydryl group of CoA, forming the product AcCoA. This is Acetyl-coenzyme A synthetase from Rubrobacter xylanophilus (strain DSM 9941 / JCM 11954 / NBRC 16129 / PRD-1).